Here is a 157-residue protein sequence, read N- to C-terminus: MSSEKRVGMVEKSNNKRQRVNQVPVFSINDHHDVLVEILRRLDGSSLCSAACVCRLWSAVARNDSIWEELCFRQVSPRPSLSLRSVVSALGGYRCLYFLCIRPVLARLPKLLWTRDQLQLSLSLYCVHYYERLYVGAWLGDAPPSSLIFLRKPVNVV.

An F-box domain is found at 24–70 (PVFSINDHHDVLVEILRRLDGSSLCSAACVCRLWSAVARNDSIWEEL).

As to quaternary structure, part of a SCF (ASK-cullin-F-box) protein ligase complex. Interacts directly with SKP1A and SKP1B. In terms of tissue distribution, highly expressed in flowers and at much lower level in seedlings, rosette leaves and green siliques.

The protein resides in the nucleus. It participates in protein modification; protein ubiquitination. Its function is as follows. Essential component of a SCF-type E3 ligase complex that positively regulates the gibberellin signaling pathway. Upon gibberellin treatment, such complex probably mediates the ubiquitination and subsequent degradation of DELLA proteins (GAI, RGA and RGL2), some repressors of the gibberellin pathway, leading to activate the pathway. Can partially complement the absence of GID2/SLY1. The polypeptide is F-box protein SNE (SNE) (Arabidopsis thaliana (Mouse-ear cress)).